The primary structure comprises 423 residues: Galactosylceramide sulfotransferase (423 aa).

The Cytoplasmic segment spans residues 1-14 (MLPPQKKPWESMAK). A helical; Signal-anchor for type II membrane protein membrane pass occupies residues 15 to 35 (GLVLGALFTSFLLLVYSYAVP). At 36-423 (PLHAGLASTT…WKFIRDFLRW (388 aa)) the chain is on the lumenal side. 2 N-linked (GlcNAc...) asparagine glycosylation sites follow: Asn66 and Asn312.

Belongs to the galactose-3-O-sulfotransferase family. Expressed in kidney proximal tubule, gastric mucosa and adenocarcinoma. Highly expressed in renal cell carcinoma cell lines.

The protein resides in the golgi apparatus membrane. It catalyses the reaction a beta-D-galactosyl-(1&lt;-&gt;1')-N-acylsphing-4-enine + 3'-phosphoadenylyl sulfate = an N-acyl-1-beta-D-(3-O-sulfo)-galactosyl-sphing-4-enine + adenosine 3',5'-bisphosphate + H(+). The catalysed reaction is a 1-O-alkyl-2-acyl-3-O-(beta-D-galactosyl)-sn-glycerol + 3'-phosphoadenylyl sulfate = a 1-O-alkyl-2-acyl-3-(beta-D-3-sulfogalactosyl)-sn-glycerol + adenosine 3',5'-bisphosphate + H(+). The enzyme catalyses a beta-D-Gal-(1&lt;-&gt;1')-ceramide + 3'-phosphoadenylyl sulfate = 1-(3-O-sulfo-beta-D-galactosyl)-ceramide + adenosine 3',5'-bisphosphate + H(+). It carries out the reaction a 1,2-diacyl-3-O-(beta-D-galactosyl)-sn-glycerol + 3'-phosphoadenylyl sulfate = 1,2-diacyl-3-(3-O-sulfo-beta-D-galactosyl)-sn-glycerol + adenosine 3',5'-bisphosphate + H(+). It catalyses the reaction a beta-D-Gal-(1-&gt;4)-beta-D-Glc-(1&lt;-&gt;1)-Cer(d18:1(4E)) + 3'-phosphoadenylyl sulfate = beta-D-3-sulfogalactosyl-(1-&gt;4)-beta-D-glucosyl-(1&lt;-&gt;1')-N-acylsphing-4-enine + adenosine 3',5'-bisphosphate + H(+). The protein operates within lipid metabolism; sphingolipid metabolism. Its function is as follows. Catalyzes the transfer of a sulfate group to position 3 of non-reducing beta-galactosyl residues in glycerolipids and sphingolipids, therefore participates in the biosynthesis of sulfoglycolipids. Catalyzes the synthesis of galactosylceramide sulfate (sulfatide), a major lipid component of the myelin sheath and of monogalactosylalkylacylglycerol sulfate (seminolipid), present in spermatocytes. Seems to prefer beta-glycosides at the non-reducing termini of sugar chains attached to a lipid moiety. Also acts on lactosylceramide, galactosyl 1-alkyl-2-sn-glycerol and galactosyl diacylglycerol (in vitro). The protein is Galactosylceramide sulfotransferase of Homo sapiens (Human).